The chain runs to 113 residues: Putative anti-sigma factor antagonist TM_1081 (113 aa).

The STAS domain maps to 1 to 110; the sequence is MFPYKIVDDV…DTISEAMEEV (110 aa). Ser-55 is subject to Phosphoserine.

It belongs to the anti-sigma-factor antagonist family. In terms of processing, phosphorylated on a serine residue.

In terms of biological role, in the phosphorylated form it could act as an anti-anti-sigma factor that counteracts an anti-sigma factor and thus releases a sigma factor from inhibition. This Thermotoga maritima (strain ATCC 43589 / DSM 3109 / JCM 10099 / NBRC 100826 / MSB8) protein is Putative anti-sigma factor antagonist TM_1081.